The sequence spans 274 residues: 2,3,4,5-tetrahydropyridine-2,6-dicarboxylate N-succinyltransferase (274 aa).

2 residues coordinate substrate: R104 and D141.

Belongs to the transferase hexapeptide repeat family. As to quaternary structure, homotrimer.

Its subcellular location is the cytoplasm. It catalyses the reaction (S)-2,3,4,5-tetrahydrodipicolinate + succinyl-CoA + H2O = (S)-2-succinylamino-6-oxoheptanedioate + CoA. Its pathway is amino-acid biosynthesis; L-lysine biosynthesis via DAP pathway; LL-2,6-diaminopimelate from (S)-tetrahydrodipicolinate (succinylase route): step 1/3. This Shewanella sediminis (strain HAW-EB3) protein is 2,3,4,5-tetrahydropyridine-2,6-dicarboxylate N-succinyltransferase.